A 475-amino-acid chain; its full sequence is MSPQTETKTGFGFKAGVKDYRLNYYTPEYDTKDTDILAAFRMTPQPGVPPEEAGAAVAAESSTGTWTTVWTDGLTSLDRYKGRCYDIEPVAGEENQYIAYVAYPLDLFEEGSVTNMFTSIVGNVFGFKALRALRLEDLRIPPAYSKTFQGPPHGIQAERDKLNKYGRPLLGCTIKPKLGLSAKNYGRAVYECLRGGLDFTKDDENVNSQPFMRWRDRFLFVAEALFKSQAETGEVKGHYLNATAGTCEEMMKRAIFARELGAPIVMHDYLTGGFTANTSLAHYCRDNGLLLHIHRAMHAVIDRQRNHGMHFRVLAKALRMSGGDHVHAGTVVGKLEGEREVTLGFVDSLRDDYIEKDRSRGIYFTQDWVSMPGVFPVASGGIHVWHMPALTEIFGDDSVLQFGGGTLGHPWGNAPGAVANRVASEACVQARNEGRDLAREGNEIIREASKWSPELAAACEVWKEIKFEFETIDTL.

A propeptide spanning residues 1 to 2 is cleaved from the precursor; that stretch reads MS. Residue Pro-3 is modified to N-acetylproline. Lys-14 is modified (N6,N6,N6-trimethyllysine). Residues Asn-123 and Thr-173 each contribute to the substrate site. Catalysis depends on Lys-175, which acts as the Proton acceptor. Lys-177 provides a ligand contact to substrate. Positions 201, 203, and 204 each coordinate Mg(2+). An N6-carboxylysine modification is found at Lys-201. The active-site Proton acceptor is His-294. Substrate-binding residues include Arg-295, His-327, and Ser-379.

This sequence belongs to the RuBisCO large chain family. Type I subfamily. Heterohexadecamer of 8 large chains and 8 small chains; disulfide-linked. The disulfide link is formed within the large subunit homodimers. The cofactor is Mg(2+). In terms of processing, the disulfide bond which can form in the large chain dimeric partners within the hexadecamer appears to be associated with oxidative stress and protein turnover.

It is found in the plastid. The protein localises to the chloroplast. The catalysed reaction is 2 (2R)-3-phosphoglycerate + 2 H(+) = D-ribulose 1,5-bisphosphate + CO2 + H2O. The enzyme catalyses D-ribulose 1,5-bisphosphate + O2 = 2-phosphoglycolate + (2R)-3-phosphoglycerate + 2 H(+). RuBisCO catalyzes two reactions: the carboxylation of D-ribulose 1,5-bisphosphate, the primary event in carbon dioxide fixation, as well as the oxidative fragmentation of the pentose substrate in the photorespiration process. Both reactions occur simultaneously and in competition at the same active site. This chain is Ribulose bisphosphate carboxylase large chain, found in Angiopteris evecta (Mule's foot fern).